Here is a 353-residue protein sequence, read N- to C-terminus: Rhodopsin (353 aa).

At 1–36 the chain is on the extracellular side; the sequence is MNGTEGPYFYVPMVNTSGIVRSPYEYPQYYLVNPAA. Asn-2 and Asn-15 each carry an N-linked (GlcNAc...) asparagine glycan. Residues 37 to 61 form a helical membrane-spanning segment; it reads YAALGAYMFLLILVGFPINFLTLYV. Residues 62–73 are Cytoplasmic-facing; it reads TIEHKKLRTPLN. The chain crosses the membrane as a helical span at residues 74–96; that stretch reads YILLNLAVADLFMVFGGFTTTMY. Residues 97-110 are Extracellular-facing; it reads TSMHGYFVLGRLGC. The cysteines at positions 110 and 187 are disulfide-linked. Residues 111–133 form a helical membrane-spanning segment; sequence NIEGFFATLGGEIALWSLVVLAI. The 'Ionic lock' involved in activated form stabilization signature appears at 134–136; that stretch reads ERW. The Cytoplasmic segment spans residues 134–152; sequence ERWVVVCKPISNFRFGENH. The helical transmembrane segment at 153–173 threads the bilayer; that stretch reads AIMGLAFTWLMAMACAAPPLV. The Extracellular portion of the chain corresponds to 174–202; sequence GWSRYIPEGMQCSCGIDYYTRAEGFNNES. N-linked (GlcNAc...) asparagine glycosylation is present at Asn-200. Residues 203-224 form a helical membrane-spanning segment; sequence FVIYMFVCHFLIPLMVVFFCYG. Topologically, residues 225-252 are cytoplasmic; sequence RLLCAVKEAAAAQQESETTQRAEREVTR. A helical transmembrane segment spans residues 253–274; that stretch reads MVVIMVIAFLICWCPYAGVAWW. The Extracellular portion of the chain corresponds to 275 to 286; the sequence is IFTHQGSDFGPV. The chain crosses the membrane as a helical span at residues 287–308; the sequence is FMTIPAFFAKSSSIYNPMIYIC. Lys-296 carries the post-translational modification N6-(retinylidene)lysine. Residues 309-353 are Cytoplasmic-facing; it reads LNKQFRHCMITTLCCGKNPFEEEEGASTASKTEASSVSSSSVSPA. 2 S-palmitoyl cysteine lipidation sites follow: Cys-322 and Cys-323. Residues 331 to 353 are disordered; the sequence is EEGASTASKTEASSVSSSSVSPA. The segment covering 334 to 353 has biased composition (low complexity); that stretch reads ASTASKTEASSVSSSSVSPA.

Belongs to the G-protein coupled receptor 1 family. Opsin subfamily. In terms of processing, phosphorylated on some or all of the serine and threonine residues present in the C-terminal region. Contains one covalently linked retinal chromophore.

The protein localises to the membrane. It localises to the cell projection. The protein resides in the cilium. It is found in the photoreceptor outer segment. Its function is as follows. Photoreceptor required for image-forming vision at low light intensity. While most salt water fish species use retinal as chromophore, most freshwater fish use 3-dehydroretinal, or a mixture of retinal and 3-dehydroretinal. Light-induced isomerization of 11-cis to all-trans retinal triggers a conformational change that activates signaling via G-proteins. Subsequent receptor phosphorylation mediates displacement of the bound G-protein alpha subunit by arrestin and terminates signaling. The chain is Rhodopsin (rho) from Lithognathus mormyrus (Striped seabream).